Consider the following 122-residue polypeptide: Cytochrome c-556 (122 aa).

The heme site is built by Met-11, Cys-111, Cys-114, and His-115. The heme c site is built by Met-11, Cys-111, Cys-114, and His-115.

Monomer. In terms of processing, binds 1 heme c group covalently per subunit.

Functionally, low-spin monoheme cytochrome c. The chain is Cytochrome c-556 from Agrobacterium tumefaciens (strain B2A).